Consider the following 837-residue polypeptide: Tuftelin-interacting protein 11 (837 aa).

2 stretches are compositionally biased toward basic and acidic residues: residues 1-13 (MSLS…GEGR) and 50-64 (TYGV…DERP). Disordered regions lie at residues 1-21 (MSLS…DDER) and 50-136 (TYGV…AGGT). The tract at residues 1-50 (MSLSHLYRDGEGRVDDDDDERENFEITDWDLQNEFNPNRQRHWQTKEEAT) is required for interaction with DHX15. 3 positions are modified to phosphoserine: S2, S59, and S98. Positions 91-102 (EEAELDDSEDEE) are enriched in acidic residues. A compositionally biased stretch (basic and acidic residues) spans 103–116 (KPGKQEELPKDLGP). S144 is subject to Phosphoserine. Residues 149–195 (TKGIGQKLLQKMGYVPGRGLGKNAQGIINPIEAKQRKGKGAVGAYGS) form the G-patch domain. The segment at 183–236 (QRKGKGAVGAYGSERTTQSLQDFPVVDSEEEAEEEFQKELSQWRKDPSGSKKKP) is disordered. Phosphoserine is present on S210. Basic and acidic residues predominate over residues 217-231 (EFQKELSQWRKDPSG). A Nuclear localization signal motif is present at residues 700-705 (VKDKFN). The segment at 710-734 (IMNRAVSSNVGAYMQPGARENIAYL) is required for nuclear speckle localization.

Belongs to the TFP11/STIP family. Identified in the spliceosome C complex. Found in the Intron Large (IL) complex, a post-mRNA release spliceosomal complex containing the excised intron, U2, U5 and U6 snRNPs, and splicing factors. Interacts with TUFT1. Interacts with DHX15; indicative for a recruitment of DHX15 to the IL complex. Interacts with GCFC2.

Its subcellular location is the cytoplasm. The protein resides in the nucleus. Its function is as follows. Involved in pre-mRNA splicing, specifically in spliceosome disassembly during late-stage splicing events. Intron turnover seems to proceed through reactions in two lariat-intron associated complexes termed Intron Large (IL) and Intron Small (IS). In cooperation with DHX15 seems to mediate the transition of the U2, U5 and U6 snRNP-containing IL complex to the snRNP-free IS complex leading to efficient debranching and turnover of excised introns. May play a role in the differentiation of ameloblasts and odontoblasts or in the forming of the enamel extracellular matrix. In Oryctolagus cuniculus (Rabbit), this protein is Tuftelin-interacting protein 11 (TFIP11).